The primary structure comprises 327 residues: Autoinducer 2 import system permease protein LsrD (327 aa).

The next 9 membrane-spanning stretches (helical) occupy residues 3 to 23 (LNWE…FGAI), 41 to 61 (ICIG…GIDI), 63 to 83 (LGST…FGLP), 86 to 106 (LAVP…AALI), 114 to 134 (LVIT…LSGL), 158 to 178 (VLGL…FWLI), 211 to 231 (ALYG…VSYF), 257 to 277 (IYGG…VGYL), and 283 to 303 (MVGI…VVVV).

The protein belongs to the binding-protein-dependent transport system permease family. AraH/RbsC subfamily. As to quaternary structure, the complex is composed of two ATP-binding proteins (LsrA), two transmembrane proteins (LsrC and LsrD) and a solute-binding protein (LsrB).

Its subcellular location is the cell inner membrane. Part of the ABC transporter complex LsrABCD involved in autoinducer 2 (AI-2) import. Probably responsible for the translocation of the substrate across the membrane. The chain is Autoinducer 2 import system permease protein LsrD (lsrD) from Enterobacter sp. (strain 638).